A 490-amino-acid chain; its full sequence is Cysteine protease 1 (490 aa).

Positions 1–31 are cleaved as a signal peptide; sequence MAGGGGKSVAAALAMACFLLILAAFAPPAAA. The propeptide at 32–154 is activation peptide; that stretch reads APPDIMSIIR…EAYRHDGVEA (123 aa). 5 cysteine pairs are disulfide-bonded: Cys177/Cys220, Cys211/Cys253, Cys311/Cys364, Cys395/Cys407, and Cys401/Cys422. Cys180 is a catalytic residue. Residues His317 and Asn339 contribute to the active site. Asn356 is a glycosylation site (N-linked (GlcNAc...) asparagine). A propeptide spans 379–490 (removed in mature form); sequence NPKPSPPSPA…FVVLNREDLV (112 aa).

The protein belongs to the peptidase C1 family. Highly expressed in the tapetum and developing pollen of the anther locules. Weakly expressed in root and germinating seed, hardly in the anther-less-flower and not detected in leaf.

In terms of biological role, cysteine protease that may play a role in pollen development. May be regulated by the transcription factor UDT1 in developing anthers and play a role in tapetum development. Positively regulated by the transcription factor TDR in developing anthers and may play a role in tapetum programmed cell death (PCD). In Oryza sativa subsp. japonica (Rice), this protein is Cysteine protease 1 (CP1).